The following is a 510-amino-acid chain: ATP synthase subunit alpha (510 aa).

Residue 169–176 (GDRQTGKT) coordinates ATP.

This sequence belongs to the ATPase alpha/beta chains family. In terms of assembly, F-type ATPases have 2 components, CF(1) - the catalytic core - and CF(0) - the membrane proton channel. CF(1) has five subunits: alpha(3), beta(3), gamma(1), delta(1), epsilon(1). CF(0) has four main subunits: a(1), b(1), b'(1) and c(9-12).

It localises to the cell inner membrane. It carries out the reaction ATP + H2O + 4 H(+)(in) = ADP + phosphate + 5 H(+)(out). Its function is as follows. Produces ATP from ADP in the presence of a proton gradient across the membrane. The alpha chain is a regulatory subunit. The protein is ATP synthase subunit alpha of Rhodopseudomonas palustris (strain BisA53).